The chain runs to 254 residues: Alcohol dehydrogenase (254 aa).

10-33 (FVAGLGGIGLDTNREIVKSGPKNL) serves as a coordination point for NAD(+). S138 is a binding site for substrate. The Proton acceptor role is filled by Y151.

This sequence belongs to the short-chain dehydrogenases/reductases (SDR) family. Homodimer.

It catalyses the reaction a primary alcohol + NAD(+) = an aldehyde + NADH + H(+). The enzyme catalyses a secondary alcohol + NAD(+) = a ketone + NADH + H(+). This chain is Alcohol dehydrogenase (Adh), found in Scaptomyza albovittata (Fruit fly).